We begin with the raw amino-acid sequence, 34 residues long: MSDIN-like toxin proprotein 3 (34 aa).

Residues 1–10 (MSDINTARLP) constitute a propeptide that is removed on maturation. Positions 11 to 20 (FFQPPEFRPP) form a cross-link, cyclopeptide (Phe-Pro). Positions 21–34 (CVGDDIEMVLTRGE) are excised as a propeptide.

This sequence belongs to the MSDIN fungal toxin family. Post-translationally, processed by the macrocyclase-peptidase enzyme POPB to yield a toxic cyclic decapeptide. POPB first removes 10 residues from the N-terminus. Conformational trapping of the remaining peptide forces the enzyme to release this intermediate rather than proceed to macrocyclization. The enzyme rebinds the remaining peptide in a different conformation and catalyzes macrocyclization of the N-terminal 10 residues.

Its function is as follows. Probable toxin that belongs to the MSDIN-like toxin family responsible for a large number of food poisoning cases and deaths. This chain is MSDIN-like toxin proprotein 3, found in Amanita bisporigera (Destroying angel).